The primary structure comprises 321 residues: Dolichyl N-acetyl-alpha-D-glucosaminyl phosphate 3-beta-D-2,3-diacetamido-2,3-dideoxy-beta-D-glucuronosyltransferase (321 aa).

The next 2 membrane-spanning stretches (helical) occupy residues 252–272 and 290–310; these read FGFLFMLLSIIITGLLIFIYI and LYIALPILLFLFHCLISYGFF.

This sequence belongs to the glycosyltransferase 2 family.

The protein localises to the cell membrane. The enzyme catalyses an archaeal dolichyl N-acetyl-alpha-D-glucosaminyl phosphate + UDP-2,3-diacetamido-2,3-dideoxy-alpha-D-glucuronate = an archaeal dolichyl 3-O-(2,3-diacetamido-2,3-dideoxy- beta-D-glucuronosyl)-N-acetyl- alpha-D-glucosaminyl phosphate + UDP + H(+). It functions in the pathway cell surface structure biogenesis; S-layer biogenesis. Its pathway is protein modification; protein glycosylation. In terms of biological role, involved in the assembly of an N-linked disaccharide that decorates the S-layer glycoprotein and flagellins. AglC catalyzes the transfer of 2,3-diacetamido-2,3-dideoxy-alpha-D-glucuronic acid (Glc-2,3-diNAcA) from uridine 5'-diphospho 2,3-diacetamido-2,3-dideoxy-alpha-D-glucuronic acid (UDP-Glc-2,3-diNAcA) to the AglK product Dol-P-GlcNAc to yield Dol-P-GlcNAc-Glc-2,3-diNAcA. AglC is specific for the monophosphate-linked Dol-P-GlcNAc. The protein is Dolichyl N-acetyl-alpha-D-glucosaminyl phosphate 3-beta-D-2,3-diacetamido-2,3-dideoxy-beta-D-glucuronosyltransferase of Methanococcus voltae.